A 473-amino-acid polypeptide reads, in one-letter code: Lactate utilization protein B 2 (473 aa).

4Fe-4S ferredoxin-type domains are found at residues 302-332 (GSEF…GHSY) and 351-380 (YDDY…LHDL). [4Fe-4S] cluster contacts are provided by Cys-311, Cys-314, Cys-317, Cys-321, Cys-364, Cys-367, and Cys-371.

Belongs to the LutB/YkgF family.

Functionally, is involved in L-lactate degradation and allows cells to grow with lactate as the sole carbon source. Has probably a role as an electron transporter during oxidation of L-lactate. This is Lactate utilization protein B 2 from Bacillus mycoides (strain KBAB4) (Bacillus weihenstephanensis).